A 185-amino-acid chain; its full sequence is Probable nicotinate-nucleotide adenylyltransferase (185 aa).

The protein belongs to the NadD family.

The catalysed reaction is nicotinate beta-D-ribonucleotide + ATP + H(+) = deamido-NAD(+) + diphosphate. It functions in the pathway cofactor biosynthesis; NAD(+) biosynthesis; deamido-NAD(+) from nicotinate D-ribonucleotide: step 1/1. Functionally, catalyzes the reversible adenylation of nicotinate mononucleotide (NaMN) to nicotinic acid adenine dinucleotide (NaAD). This Methylorubrum extorquens (strain CM4 / NCIMB 13688) (Methylobacterium extorquens) protein is Probable nicotinate-nucleotide adenylyltransferase.